Here is a 272-residue protein sequence, read N- to C-terminus: Short-chain dehydrogenase srdC (272 aa).

NADP(+) is bound by residues Ile-15, Asp-65, Arg-127, Tyr-173, Lys-177, Val-206, and Thr-208. Tyr-173 acts as the Proton donor in catalysis. The active-site Lowers pKa of active site Tyr is the Lys-177.

Belongs to the short-chain dehydrogenases/reductases (SDR) family.

In terms of biological role, short-chain dehydrogenase; part of the gene cluster that mediates the biosynthesis of sordarial, a salicylic aldehyde structurally related to the phytotoxin pyriculol. The most interesting aspect of this pathway is formation of an aromatic product from the highly reducing polyketide synthase srdA. SrdA synthesizes a reduced polyketide chain from one molecule of acetyl-CoA and five molecules of malonyl-CoA. The polyketide chain is then reductively released as an aldehyde. The oxidoreductases srdC, srdD and srdE then oxidize one of the hydroxy groups to facilitate the intramolecular aldol condensation, followed by dehydration to yield a salicylic aldehyde. This aldehyde can undergo facile reduction by endogenous reductases to yield the alcohol 1-hydroxy-2-hydroxymethyl-3-pent-1,3-dienylbenzene. The flavin-dependent srdI counteract against the propensity of the aldehydes to be reduced under physiological conditions and is responsible for reoxidizing 1-hydroxy-2-hydroxymethyl-3-pent-1,3-dienylbenzene back to the salicylic aldehyde. This salicylic aldehyde is then selectively epoxidized by the cupin-domain-containing oxidoreductase srdB to yield the epoxide, which can be hydrolyzed stereoselectively by the hydrolase srdG to give the final product sordarial. In Neurospora crassa (strain ATCC 24698 / 74-OR23-1A / CBS 708.71 / DSM 1257 / FGSC 987), this protein is Short-chain dehydrogenase srdC.